A 348-amino-acid chain; its full sequence is GMP reductase (348 aa).

108-131 (ADFIKLRQILALSPSLKFICIDVA) lines the NADP(+) pocket. Positions 181 and 183 each coordinate K(+). The active-site Thioimidate intermediate is the Cys-186. 216–239 (IVSDGGCTMPGDVAKAFGGGADFV) is an NADP(+) binding site.

This sequence belongs to the IMPDH/GMPR family. GuaC type 1 subfamily. Homotetramer.

It carries out the reaction IMP + NH4(+) + NADP(+) = GMP + NADPH + 2 H(+). Catalyzes the irreversible NADPH-dependent deamination of GMP to IMP. It functions in the conversion of nucleobase, nucleoside and nucleotide derivatives of G to A nucleotides, and in maintaining the intracellular balance of A and G nucleotides. The protein is GMP reductase of Edwardsiella ictaluri (strain 93-146).